The chain runs to 117 residues: Fluoride-specific ion channel FluC 1 (117 aa).

Helical transmembrane passes span Met-1–Leu-21, Ile-35–Ala-55, Leu-60–Ser-80, and Phe-97–Ile-117. The Na(+) site is built by Gly-71 and Thr-74.

Belongs to the fluoride channel Fluc/FEX (TC 1.A.43) family.

It localises to the cell membrane. The catalysed reaction is fluoride(in) = fluoride(out). With respect to regulation, na(+) is not transported, but it plays an essential structural role and its presence is essential for fluoride channel function. Its function is as follows. Fluoride-specific ion channel. Important for reducing fluoride concentration in the cell, thus reducing its toxicity. This Staphylococcus haemolyticus (strain JCSC1435) protein is Fluoride-specific ion channel FluC 1.